The sequence spans 354 residues: UDP-N-acetylglucosamine--N-acetylmuramyl-(pentapeptide) pyrophosphoryl-undecaprenol N-acetylglucosamine transferase (354 aa).

Residues 15-17 (TGG), Asn-127, Arg-163, Ser-191, Ile-244, 263-268 (ALTVSE), and Gln-288 contribute to the UDP-N-acetyl-alpha-D-glucosamine site.

The protein belongs to the glycosyltransferase 28 family. MurG subfamily.

It localises to the cell inner membrane. It carries out the reaction di-trans,octa-cis-undecaprenyl diphospho-N-acetyl-alpha-D-muramoyl-L-alanyl-D-glutamyl-meso-2,6-diaminopimeloyl-D-alanyl-D-alanine + UDP-N-acetyl-alpha-D-glucosamine = di-trans,octa-cis-undecaprenyl diphospho-[N-acetyl-alpha-D-glucosaminyl-(1-&gt;4)]-N-acetyl-alpha-D-muramoyl-L-alanyl-D-glutamyl-meso-2,6-diaminopimeloyl-D-alanyl-D-alanine + UDP + H(+). Its pathway is cell wall biogenesis; peptidoglycan biosynthesis. Its function is as follows. Cell wall formation. Catalyzes the transfer of a GlcNAc subunit on undecaprenyl-pyrophosphoryl-MurNAc-pentapeptide (lipid intermediate I) to form undecaprenyl-pyrophosphoryl-MurNAc-(pentapeptide)GlcNAc (lipid intermediate II). The polypeptide is UDP-N-acetylglucosamine--N-acetylmuramyl-(pentapeptide) pyrophosphoryl-undecaprenol N-acetylglucosamine transferase (Serratia proteamaculans (strain 568)).